We begin with the raw amino-acid sequence, 629 residues long: Phosphomethylpyrimidine synthase (629 aa).

A compositionally biased stretch (polar residues) spans 1–13; it reads MTTKSKNAINLSD. Residues 1 to 22 form a disordered region; the sequence is MTTKSKNAINLSDSAKVDEQSV. Residues N233, M262, Y291, H327, 347 to 349, 388 to 391, and E427 each bind substrate; these read SRG and DGLR. Zn(2+) is bound at residue H431. Y454 serves as a coordination point for substrate. Residue H495 coordinates Zn(2+). Residues C575, C578, and C583 each coordinate [4Fe-4S] cluster.

It belongs to the ThiC family. As to quaternary structure, homodimer. [4Fe-4S] cluster serves as cofactor.

It catalyses the reaction 5-amino-1-(5-phospho-beta-D-ribosyl)imidazole + S-adenosyl-L-methionine = 4-amino-2-methyl-5-(phosphooxymethyl)pyrimidine + CO + 5'-deoxyadenosine + formate + L-methionine + 3 H(+). The protein operates within cofactor biosynthesis; thiamine diphosphate biosynthesis. In terms of biological role, catalyzes the synthesis of the hydroxymethylpyrimidine phosphate (HMP-P) moiety of thiamine from aminoimidazole ribotide (AIR) in a radical S-adenosyl-L-methionine (SAM)-dependent reaction. The polypeptide is Phosphomethylpyrimidine synthase (Pseudomonas fluorescens (strain Pf0-1)).